The chain runs to 211 residues: Thiamine-phosphate synthase (211 aa).

4-amino-2-methyl-5-(diphosphooxymethyl)pyrimidine is bound by residues 37 to 41 (QLRIK) and asparagine 69. Residues aspartate 70 and aspartate 89 each contribute to the Mg(2+) site. Serine 108 provides a ligand contact to 4-amino-2-methyl-5-(diphosphooxymethyl)pyrimidine. 2-[(2R,5Z)-2-carboxy-4-methylthiazol-5(2H)-ylidene]ethyl phosphate is bound at residue 134–136 (TQT). Lysine 137 is a binding site for 4-amino-2-methyl-5-(diphosphooxymethyl)pyrimidine. Residues glycine 166 and 186-187 (VS) contribute to the 2-[(2R,5Z)-2-carboxy-4-methylthiazol-5(2H)-ylidene]ethyl phosphate site.

It belongs to the thiamine-phosphate synthase family. Requires Mg(2+) as cofactor.

The catalysed reaction is 2-[(2R,5Z)-2-carboxy-4-methylthiazol-5(2H)-ylidene]ethyl phosphate + 4-amino-2-methyl-5-(diphosphooxymethyl)pyrimidine + 2 H(+) = thiamine phosphate + CO2 + diphosphate. It carries out the reaction 2-(2-carboxy-4-methylthiazol-5-yl)ethyl phosphate + 4-amino-2-methyl-5-(diphosphooxymethyl)pyrimidine + 2 H(+) = thiamine phosphate + CO2 + diphosphate. The enzyme catalyses 4-methyl-5-(2-phosphooxyethyl)-thiazole + 4-amino-2-methyl-5-(diphosphooxymethyl)pyrimidine + H(+) = thiamine phosphate + diphosphate. It participates in cofactor biosynthesis; thiamine diphosphate biosynthesis; thiamine phosphate from 4-amino-2-methyl-5-diphosphomethylpyrimidine and 4-methyl-5-(2-phosphoethyl)-thiazole: step 1/1. Its function is as follows. Condenses 4-methyl-5-(beta-hydroxyethyl)thiazole monophosphate (THZ-P) and 2-methyl-4-amino-5-hydroxymethyl pyrimidine pyrophosphate (HMP-PP) to form thiamine monophosphate (TMP). The protein is Thiamine-phosphate synthase of Citrobacter koseri (strain ATCC BAA-895 / CDC 4225-83 / SGSC4696).